A 457-amino-acid polypeptide reads, in one-letter code: tRNA-2-methylthio-N(6)-dimethylallyladenosine synthase (457 aa).

The MTTase N-terminal domain occupies 3 to 120; the sequence is KKVYVKTFGC…LPQMIDARRE (118 aa). Residues Cys-12, Cys-49, Cys-83, Cys-157, Cys-161, and Cys-164 each contribute to the [4Fe-4S] cluster site. A Radical SAM core domain is found at 143–377; sequence RVEGPSAFVS…QATIEENVAR (235 aa). Positions 380–447 constitute a TRAM domain; that stretch reads QSMLGKVERI…PHSLRGELVL (68 aa).

This sequence belongs to the methylthiotransferase family. MiaB subfamily. Monomer. Requires [4Fe-4S] cluster as cofactor.

The protein resides in the cytoplasm. It carries out the reaction N(6)-dimethylallyladenosine(37) in tRNA + (sulfur carrier)-SH + AH2 + 2 S-adenosyl-L-methionine = 2-methylsulfanyl-N(6)-dimethylallyladenosine(37) in tRNA + (sulfur carrier)-H + 5'-deoxyadenosine + L-methionine + A + S-adenosyl-L-homocysteine + 2 H(+). Its function is as follows. Catalyzes the methylthiolation of N6-(dimethylallyl)adenosine (i(6)A), leading to the formation of 2-methylthio-N6-(dimethylallyl)adenosine (ms(2)i(6)A) at position 37 in tRNAs that read codons beginning with uridine. The protein is tRNA-2-methylthio-N(6)-dimethylallyladenosine synthase of Burkholderia thailandensis (strain ATCC 700388 / DSM 13276 / CCUG 48851 / CIP 106301 / E264).